The chain runs to 393 residues: Formate-dependent phosphoribosylglycinamide formyltransferase (393 aa).

N(1)-(5-phospho-beta-D-ribosyl)glycinamide contacts are provided by residues glutamate 22 to leucine 23 and glutamate 82. Residues arginine 114, lysine 155, serine 160–glutamine 165, glutamate 195–valine 198, and glutamate 203 each bind ATP. The ATP-grasp domain maps to arginine 119–leucine 308. Residues glutamate 267 and glutamate 279 each contribute to the Mg(2+) site. N(1)-(5-phospho-beta-D-ribosyl)glycinamide is bound by residues aspartate 286, lysine 356, and arginine 363 to arginine 364.

It belongs to the PurK/PurT family. Homodimer.

It catalyses the reaction N(1)-(5-phospho-beta-D-ribosyl)glycinamide + formate + ATP = N(2)-formyl-N(1)-(5-phospho-beta-D-ribosyl)glycinamide + ADP + phosphate + H(+). It participates in purine metabolism; IMP biosynthesis via de novo pathway; N(2)-formyl-N(1)-(5-phospho-D-ribosyl)glycinamide from N(1)-(5-phospho-D-ribosyl)glycinamide (formate route): step 1/1. Functionally, involved in the de novo purine biosynthesis. Catalyzes the transfer of formate to 5-phospho-ribosyl-glycinamide (GAR), producing 5-phospho-ribosyl-N-formylglycinamide (FGAR). Formate is provided by PurU via hydrolysis of 10-formyl-tetrahydrofolate. The protein is Formate-dependent phosphoribosylglycinamide formyltransferase of Hydrogenovibrio crunogenus (strain DSM 25203 / XCL-2) (Thiomicrospira crunogena).